The chain runs to 364 residues: Protein-glutamate methylesterase/protein-glutamine glutaminase 1 (364 aa).

The Response regulatory domain maps to 6-123; the sequence is KVLCVDDSAL…RDGMLDYSEK (118 aa). At D57 the chain carries 4-aspartylphosphate. Residues 165–357 form the CheB-type methylesterase domain; it reads LVSTEKLIIV…RRIMARLASM (193 aa). Residues S177, H203, and D299 contribute to the active site.

It belongs to the CheB family. Phosphorylated by CheA. Phosphorylation of the N-terminal regulatory domain activates the methylesterase activity.

The protein localises to the cytoplasm. The enzyme catalyses [protein]-L-glutamate 5-O-methyl ester + H2O = L-glutamyl-[protein] + methanol + H(+). It catalyses the reaction L-glutaminyl-[protein] + H2O = L-glutamyl-[protein] + NH4(+). Functionally, involved in chemotaxis. Part of a chemotaxis signal transduction system that modulates chemotaxis in response to various stimuli. Catalyzes the demethylation of specific methylglutamate residues introduced into the chemoreceptors (methyl-accepting chemotaxis proteins or MCP) by CheR. Also mediates the irreversible deamidation of specific glutamine residues to glutamic acid. The chain is Protein-glutamate methylesterase/protein-glutamine glutaminase 1 from Burkholderia mallei (strain ATCC 23344).